The following is a 211-amino-acid chain: High frequency lysogenization protein HflD homolog (211 aa).

The protein belongs to the HflD family.

It is found in the cytoplasm. The protein resides in the cell membrane. This is High frequency lysogenization protein HflD homolog from Buchnera aphidicola subsp. Acyrthosiphon pisum (strain 5A).